The chain runs to 250 residues: Hydroxyacylglutathione hydrolase (250 aa).

Zn(2+) contacts are provided by histidine 53, histidine 55, aspartate 57, histidine 58, histidine 110, aspartate 127, and histidine 165.

It belongs to the metallo-beta-lactamase superfamily. Glyoxalase II family. As to quaternary structure, monomer. Requires Zn(2+) as cofactor.

The enzyme catalyses an S-(2-hydroxyacyl)glutathione + H2O = a 2-hydroxy carboxylate + glutathione + H(+). It participates in secondary metabolite metabolism; methylglyoxal degradation; (R)-lactate from methylglyoxal: step 2/2. Its function is as follows. Thiolesterase that catalyzes the hydrolysis of S-D-lactoyl-glutathione to form glutathione and D-lactic acid. In Buchnera aphidicola subsp. Schizaphis graminum (strain Sg), this protein is Hydroxyacylglutathione hydrolase.